Consider the following 350-residue polypeptide: APMENSTYDYTNYDSLGTLDPSTPVDNTVRRLRPTTIVALVIYMAVFLVGVPGNALVVWVTALEAKRTVNAIWFLNLAVADLLSCLALPILFVSIIQEGHWPFGRAACSVLPSLILLNMYASILLLATISADRFLLVFNPIWCQNTRGAGLAWLACCVAWGLALLLTIPSFLYRKVLQDDYPPKTTCGVDYGHEGVRAERAVAIVRLVVGFLLPLFTLSVCYTFLLLRTWSRNGTRSTKTLKVVVAVVVSFFIFWLPYQVMGMILALLHPSSATFRWAIRLDPLCIALAYVNCCINPIIYVVAGKGFQGQLRKSLPSLLRNVLAEESVIQGSKSFSRSTVDTVADKCQAV.

Over 1–36 the chain is Extracellular; sequence APMENSTYDYTNYDSLGTLDPSTPVDNTVRRLRPTT. An N-linked (GlcNAc...) asparagine glycan is attached at Asn-5. 2 positions are modified to sulfotyrosine: Tyr-10 and Tyr-13. Residues 37-63 form a helical membrane-spanning segment; that stretch reads IVALVIYMAVFLVGVPGNALVVWVTAL. Topologically, residues 64–68 are cytoplasmic; the sequence is EAKRT. A helical transmembrane segment spans residues 69–92; sequence VNAIWFLNLAVADLLSCLALPILF. The Extracellular portion of the chain corresponds to 93–109; it reads VSIIQEGHWPFGRAACS. Cysteines 108 and 187 form a disulfide. A helical transmembrane segment spans residues 110–131; it reads VLPSLILLNMYASILLLATISA. Residues 132 to 152 lie on the Cytoplasmic side of the membrane; it reads DRFLLVFNPIWCQNTRGAGLA. The helical transmembrane segment at 153–173 threads the bilayer; it reads WLACCVAWGLALLLTIPSFLY. Over 174-200 the chain is Extracellular; that stretch reads RKVLQDDYPPKTTCGVDYGHEGVRAER. A helical transmembrane segment spans residues 201 to 226; it reads AVAIVRLVVGFLLPLFTLSVCYTFLL. The Cytoplasmic segment spans residues 227-242; sequence LRTWSRNGTRSTKTLK. Residues 243–265 form a helical membrane-spanning segment; it reads VVVAVVVSFFIFWLPYQVMGMIL. The Extracellular segment spans residues 266 to 282; it reads ALLHPSSATFRWAIRLD. A helical transmembrane segment spans residues 283-303; that stretch reads PLCIALAYVNCCINPIIYVVA. The Cytoplasmic portion of the chain corresponds to 304–350; the sequence is GKGFQGQLRKSLPSLLRNVLAEESVIQGSKSFSRSTVDTVADKCQAV. A phosphoserine mark is found at Ser-314, Ser-317, Ser-327, Ser-332, Ser-334, and Ser-338.

The protein belongs to the G-protein coupled receptor 1 family. Homodimer. May also form higher-order oligomers. Interacts (when phosphorylated) with ARRB1 and ARRB2; the interaction is associated with internalization of C5aR. Post-translationally, sulfation plays a critical role in the association of C5aR with C5a, but no significant role in the ability of the receptor to transduce a signal and mobilize calcium in response to a small peptide agonist. Phosphorylated on serine residues in response to C5a binding, resulting in internalization of the receptor and short-term desensitization to C5a.

The protein localises to the cell membrane. It localises to the cytoplasmic vesicle. Receptor for the chemotactic and inflammatory peptide anaphylatoxin C5a. The ligand interacts with at least two sites on the receptor: a high-affinity site on the extracellular N-terminus, and a second site in the transmembrane region which activates downstream signaling events. Receptor activation stimulates chemotaxis, granule enzyme release, intracellular calcium release and superoxide anion production. The polypeptide is C5a anaphylatoxin chemotactic receptor 1 (C5AR1) (Oryctolagus cuniculus (Rabbit)).